The primary structure comprises 270 residues: Formamidopyrimidine-DNA glycosylase (270 aa).

Catalysis depends on proline 2, which acts as the Schiff-base intermediate with DNA. The active-site Proton donor is glutamate 3. Lysine 58 functions as the Proton donor; for beta-elimination activity in the catalytic mechanism. Positions 91, 109, and 151 each coordinate DNA. The segment at 236-270 adopts an FPG-type zinc-finger fold; that stretch reads MVYNRQEEPCRLCGTPIRQIRQGQRSTYYCPLCQP. Arginine 260 acts as the Proton donor; for delta-elimination activity in catalysis.

Belongs to the FPG family. Monomer. Requires Zn(2+) as cofactor.

It carries out the reaction Hydrolysis of DNA containing ring-opened 7-methylguanine residues, releasing 2,6-diamino-4-hydroxy-5-(N-methyl)formamidopyrimidine.. The enzyme catalyses 2'-deoxyribonucleotide-(2'-deoxyribose 5'-phosphate)-2'-deoxyribonucleotide-DNA = a 3'-end 2'-deoxyribonucleotide-(2,3-dehydro-2,3-deoxyribose 5'-phosphate)-DNA + a 5'-end 5'-phospho-2'-deoxyribonucleoside-DNA + H(+). Functionally, involved in base excision repair of DNA damaged by oxidation or by mutagenic agents. Acts as a DNA glycosylase that recognizes and removes damaged bases. Has a preference for oxidized purines, such as 7,8-dihydro-8-oxoguanine (8-oxoG). Has AP (apurinic/apyrimidinic) lyase activity and introduces nicks in the DNA strand. Cleaves the DNA backbone by beta-delta elimination to generate a single-strand break at the site of the removed base with both 3'- and 5'-phosphates. This Chromobacterium violaceum (strain ATCC 12472 / DSM 30191 / JCM 1249 / CCUG 213 / NBRC 12614 / NCIMB 9131 / NCTC 9757 / MK) protein is Formamidopyrimidine-DNA glycosylase.